A 210-amino-acid polypeptide reads, in one-letter code: Large ribosomal subunit protein uL3 (210 aa).

The tract at residues 122-155 is disordered; the sequence is NQKRNNFGRGPMSHGSKNHRAPGSIGAGTTPGRV.

Belongs to the universal ribosomal protein uL3 family. In terms of assembly, part of the 50S ribosomal subunit. Forms a cluster with proteins L14 and L19.

One of the primary rRNA binding proteins, it binds directly near the 3'-end of the 23S rRNA, where it nucleates assembly of the 50S subunit. This is Large ribosomal subunit protein uL3 from Nostoc punctiforme (strain ATCC 29133 / PCC 73102).